The chain runs to 29 residues: Cysteine-rich venom protein 25-A (29 aa).

The protein belongs to the CRISP family. Contains 8 disulfide bonds. Expressed by the venom gland.

The protein resides in the secreted. This is Cysteine-rich venom protein 25-A from Naja haje haje (Egyptian cobra).